The chain runs to 820 residues: Quinate repressor protein (820 aa).

The disordered stretch occupies residues 25–79 (SFEQMLLQQDSNESSRRTSPSRTHSRVDLERHSSHIVSLSSSNGSPSLEDPENRL). Over residues 59–71 (HIVSLSSSNGSPS) the composition is skewed to low complexity.

This sequence in the N-terminal section; belongs to the shikimate kinase family. In the 2nd section; belongs to the type-I 3-dehydroquinase family. The protein in the C-terminal section; belongs to the shikimate dehydrogenase family. As to quaternary structure, interacts with qutA; transcriptional activator of the quinate utilization pathway genes.

Multi-domain repressor protein that negatively regulates transcription of the quinate utilization pathway genes. May mediate its repressor activity by binding directly to the qutA activator protein. The sequence is that of Quinate repressor protein (qutR) from Talaromyces stipitatus (strain ATCC 10500 / CBS 375.48 / QM 6759 / NRRL 1006) (Penicillium stipitatum).